The sequence spans 418 residues: 1-acylglycerol-3-phosphate O-acyltransferase (418 aa).

The AB hydrolase-1 domain occupies P121–N251. Positions G197–G201 match the GXSXG motif. The HXXXXD motif motif lies at H379–D384.

The protein belongs to the peptidase S33 family. ABHD4/ABHD5 subfamily.

The protein resides in the cytoplasm. The enzyme catalyses a 1-acyl-sn-glycero-3-phosphate + an acyl-CoA = a 1,2-diacyl-sn-glycero-3-phosphate + CoA. Functionally, lysophosphatidic acid acyltransferase which functions in phosphatidic acid biosynthesis. Is highly specific for lysophosphatidic acid and able to use different acyl-CoA donors. May regulate neutral lipid accumulation and participate in the regulation of lipid turnover in vegetative cells. Possesses additional triacylglycerol lipase and phospholipase A2 activities in vitro. Is not active as esterase or lysophospholipase. The protein is 1-acylglycerol-3-phosphate O-acyltransferase of Arabidopsis thaliana (Mouse-ear cress).